We begin with the raw amino-acid sequence, 245 residues long: 23S rRNA (guanosine-2'-O-)-methyltransferase RlmB (245 aa).

Positions 197, 217, and 226 each coordinate S-adenosyl-L-methionine.

It belongs to the class IV-like SAM-binding methyltransferase superfamily. RNA methyltransferase TrmH family. RlmB subfamily.

The protein localises to the cytoplasm. The enzyme catalyses guanosine(2251) in 23S rRNA + S-adenosyl-L-methionine = 2'-O-methylguanosine(2251) in 23S rRNA + S-adenosyl-L-homocysteine + H(+). Its function is as follows. Specifically methylates the ribose of guanosine 2251 in 23S rRNA. The sequence is that of 23S rRNA (guanosine-2'-O-)-methyltransferase RlmB from Photobacterium profundum (strain SS9).